Consider the following 365-residue polypeptide: DNA replication and repair protein RecF (365 aa).

30 to 37 is an ATP binding site; the sequence is GENGQGKT.

Belongs to the RecF family.

The protein localises to the cytoplasm. In terms of biological role, the RecF protein is involved in DNA metabolism; it is required for DNA replication and normal SOS inducibility. RecF binds preferentially to single-stranded, linear DNA. It also seems to bind ATP. This is DNA replication and repair protein RecF from Desulfitobacterium hafniense (strain DSM 10664 / DCB-2).